We begin with the raw amino-acid sequence, 93 residues long: UPF0358 protein ABC2396 (93 aa).

The protein belongs to the UPF0358 family.

The sequence is that of UPF0358 protein ABC2396 from Shouchella clausii (strain KSM-K16) (Alkalihalobacillus clausii).